The following is a 351-amino-acid chain: Dihydroorotate dehydrogenase (quinone) (351 aa).

FMN is bound by residues 65–69 (AGLDK) and Thr89. Lys69 contributes to the substrate binding site. 114 to 118 (NRLGF) provides a ligand contact to substrate. 2 residues coordinate FMN: Asn150 and Asn183. Asn183 contacts substrate. Residue Ser186 is the Nucleophile of the active site. Asn188 is a binding site for substrate. FMN-binding residues include Lys228 and Thr256. 257–258 (NT) is a binding site for substrate. FMN is bound by residues Gly279, Gly308, and 329–330 (YT).

It belongs to the dihydroorotate dehydrogenase family. Type 2 subfamily. In terms of assembly, monomer. FMN serves as cofactor.

The protein localises to the cell membrane. It catalyses the reaction (S)-dihydroorotate + a quinone = orotate + a quinol. Its pathway is pyrimidine metabolism; UMP biosynthesis via de novo pathway; orotate from (S)-dihydroorotate (quinone route): step 1/1. In terms of biological role, catalyzes the conversion of dihydroorotate to orotate with quinone as electron acceptor. The protein is Dihydroorotate dehydrogenase (quinone) of Acidovorax sp. (strain JS42).